The primary structure comprises 150 residues: Arginine repressor (150 aa).

The protein belongs to the ArgR family.

Its subcellular location is the cytoplasm. The protein operates within amino-acid biosynthesis; L-arginine biosynthesis [regulation]. Functionally, regulates arginine biosynthesis genes. The sequence is that of Arginine repressor from Clostridium botulinum (strain Eklund 17B / Type B).